We begin with the raw amino-acid sequence, 142 residues long: Hemoglobin subunit alpha-A (142 aa).

One can recognise a Globin domain in the interval 2–142; sequence VLSAADKTNV…VGTVLTAKYR (141 aa). Histidine 59 is a binding site for O2. Histidine 88 is a binding site for heme b.

Belongs to the globin family. As to quaternary structure, heterotetramer of two alpha chains and two beta chains. Red blood cells.

Functionally, involved in oxygen transport from the lung to the various peripheral tissues. The chain is Hemoglobin subunit alpha-A (HBAA) from Anser indicus (Bar-headed goose).